The sequence spans 1357 residues: DNA-directed RNA polymerase subunit beta (1357 aa).

This sequence belongs to the RNA polymerase beta chain family. In terms of assembly, the RNAP catalytic core consists of 2 alpha, 1 beta, 1 beta' and 1 omega subunit. When a sigma factor is associated with the core the holoenzyme is formed, which can initiate transcription.

The enzyme catalyses RNA(n) + a ribonucleoside 5'-triphosphate = RNA(n+1) + diphosphate. In terms of biological role, DNA-dependent RNA polymerase catalyzes the transcription of DNA into RNA using the four ribonucleoside triphosphates as substrates. The protein is DNA-directed RNA polymerase subunit beta of Acinetobacter baumannii (strain ATCC 17978 / DSM 105126 / CIP 53.77 / LMG 1025 / NCDC KC755 / 5377).